Reading from the N-terminus, the 280-residue chain is Adenosylcobinamide-GDP ribazoletransferase (280 aa).

The next 6 helical transmembrane spans lie at 4–24, 39–59, 61–81, 108–128, 196–216, and 255–275; these read YLLA…GISM, VVGA…QVIF, GPVL…FNHL, TIGT…YGSI, FLIG…WIGL, and TALI…MGGF.

It belongs to the CobS family. The cofactor is Mg(2+).

It localises to the cell membrane. The catalysed reaction is alpha-ribazole + adenosylcob(III)inamide-GDP = adenosylcob(III)alamin + GMP + H(+). It catalyses the reaction alpha-ribazole 5'-phosphate + adenosylcob(III)inamide-GDP = adenosylcob(III)alamin 5'-phosphate + GMP + H(+). It functions in the pathway cofactor biosynthesis; adenosylcobalamin biosynthesis; adenosylcobalamin from cob(II)yrinate a,c-diamide: step 7/7. Joins adenosylcobinamide-GDP and alpha-ribazole to generate adenosylcobalamin (Ado-cobalamin). Also synthesizes adenosylcobalamin 5'-phosphate from adenosylcobinamide-GDP and alpha-ribazole 5'-phosphate. This is Adenosylcobinamide-GDP ribazoletransferase from Methanosarcina barkeri (strain Fusaro / DSM 804).